The following is a 141-amino-acid chain: MRQRTIVCPLIQNDGCYLLCKMADNRGVFPGQWALSGGGVEPGERIEEALRREIREELGEQLILSDITPWTFRDDIRVKTYADGRQEEIYMIYLIFDCVSANRDICINDEFQDYAWVKPEELALYDLNVATRHTLALKGLL.

The region spanning 1–141 (MRQRTIVCPL…RHTLALKGLL (141 aa)) is the Nudix hydrolase domain. The Nudix box motif lies at 38-59 (GGVEPGERIEEALRREIREELG).

It belongs to the Nudix hydrolase family. NudI subfamily. Monomer. Mg(2+) is required as a cofactor.

The catalysed reaction is a ribonucleoside 5'-triphosphate + H2O = a ribonucleoside 5'-phosphate + diphosphate + H(+). It catalyses the reaction a 2'-deoxyribonucleoside 5'-triphosphate + H2O = a 2'-deoxyribonucleoside 5'-phosphate + diphosphate + H(+). The enzyme catalyses dUTP + H2O = dUMP + diphosphate + H(+). It carries out the reaction dTTP + H2O = dTMP + diphosphate + H(+). The catalysed reaction is dCTP + H2O = dCMP + diphosphate + H(+). Functionally, catalyzes the hydrolysis of nucleoside triphosphates, with a preference for pyrimidine deoxynucleoside triphosphates (dUTP, dTTP and dCTP). The chain is Nucleoside triphosphatase NudI from Salmonella newport (strain SL254).